The following is a 293-amino-acid chain: Triosephosphate isomerase (293 aa).

25-27 (NWK) is a binding site for substrate. Residue histidine 117 is the Electrophile of the active site. The active-site Proton acceptor is the glutamate 218.

The protein belongs to the triosephosphate isomerase family. As to quaternary structure, homodimer.

It is found in the cytoplasm. The catalysed reaction is D-glyceraldehyde 3-phosphate = dihydroxyacetone phosphate. It functions in the pathway carbohydrate biosynthesis; gluconeogenesis. It participates in carbohydrate degradation; glycolysis; D-glyceraldehyde 3-phosphate from glycerone phosphate: step 1/1. In terms of biological role, involved in the gluconeogenesis. Catalyzes stereospecifically the conversion of dihydroxyacetone phosphate (DHAP) to D-glyceraldehyde-3-phosphate (G3P). This chain is Triosephosphate isomerase, found in Tropheryma whipplei (strain Twist) (Whipple's bacillus).